The following is a 715-amino-acid chain: Arginine kinase (715 aa).

Approximate repeat units lie at residues 1–366 and 367–715; these read MADP…IAKK and RSVF…KSTK. Residues 11-95 enclose the Phosphagen kinase N-terminal 1 domain; sequence KSKNAFPDPL…FDAIIEDYHS (85 aa). A substrate-binding site is contributed by 68–72; the sequence is GVGVY. Residues 123-362 form the Phosphagen kinase C-terminal 1 domain; that stretch reads YIRSTRIRVA…KALMELEKEA (240 aa). ATP-binding positions include 126–130 and histidine 189; that span reads STRIR. Glutamate 229 contributes to the substrate binding site. Arginine 233 is a binding site for ATP. Cysteine 275 contacts substrate. Residues 284 to 288 and 312 to 317 each bind ATP; these read RASVH and RGIHGE. Residue glutamate 317 coordinates substrate. The Phosphagen kinase N-terminal 2 domain occupies 365-447; that stretch reads KKRSVFPEVL…FDKIVEDYHS (83 aa). A Phosphagen kinase C-terminal 2 domain is found at 475–714; sequence YIRSTRIRVA…KKLLEIEKST (240 aa).

The protein belongs to the ATP:guanido phosphotransferase family. As to quaternary structure, monomer.

The catalysed reaction is L-arginine + ATP = N(omega)-phospho-L-arginine + ADP + H(+). In Anthopleura japonica (Sea anemone), this protein is Arginine kinase.